Consider the following 421-residue polypeptide: Gamma-glutamyl phosphate reductase (421 aa).

It belongs to the gamma-glutamyl phosphate reductase family.

It is found in the cytoplasm. The catalysed reaction is L-glutamate 5-semialdehyde + phosphate + NADP(+) = L-glutamyl 5-phosphate + NADPH + H(+). It participates in amino-acid biosynthesis; L-proline biosynthesis; L-glutamate 5-semialdehyde from L-glutamate: step 2/2. Catalyzes the NADPH-dependent reduction of L-glutamate 5-phosphate into L-glutamate 5-semialdehyde and phosphate. The product spontaneously undergoes cyclization to form 1-pyrroline-5-carboxylate. This is Gamma-glutamyl phosphate reductase from Azotobacter vinelandii (strain DJ / ATCC BAA-1303).